A 610-amino-acid polypeptide reads, in one-letter code: Myoneurin (610 aa).

Residues 24–89 (CDCTVVIGEF…IYTGTLNLDS (66 aa)) form the BTB domain. The interval 156-199 (SEVSTDSVQANPKPRALTKKSSQSKKKKKAFSSQKPGQSKAVQY) is disordered. Positions 171–185 (ALTKKSSQSKKKKKA) are enriched in basic residues. Short sequence motifs (nuclear localization signal) lie at residues 174–190 (KKSS…SSQK) and 257–262 (KRKRRK). C2H2-type zinc fingers lie at residues 302–324 (PMCN…MRIH), 330–352 (YVCH…VRTH), 358–381 (YKCE…RMHH), 387–409 (YKCD…ARKH), 415–437 (YVCD…VRRH), 443–465 (YVCD…SRKH), 471–493 (YICG…FRSH), and 499–522 (FICE…TKVH). The segment at 519–548 (TKVHSGTDKNPDCSVDDHAVSEQDSVQRSP) is disordered. Residues 523 to 539 (SGTDKNPDCSVDDHAVS) are compositionally biased toward basic and acidic residues.

Belongs to the krueppel C2H2-type zinc-finger protein family. As to expression, mainly expressed in the neuromuscular system. Located in and around synaptic myonuclei in adult muscle. Expression is dysregulated after nerve injury. Also found in the cerebellum, testis, heart, brain and liver.

It is found in the nucleus. This chain is Myoneurin (Mynn), found in Mus musculus (Mouse).